A 260-amino-acid chain; its full sequence is F-actin-capping protein subunit beta (260 aa).

Belongs to the F-actin-capping protein beta subunit family. Component of the F-actin capping complex, composed of a heterodimer of an alpha and a beta subunit.

The protein localises to the cytoplasm. Its subcellular location is the cytoskeleton. The protein resides in the actin patch. Functionally, F-actin-capping proteins bind in a Ca(2+)-independent manner to the fast growing ends of actin filaments (barbed end) thereby blocking the exchange of subunits at these ends. Unlike other capping proteins (such as gelsolin and severin), these proteins do not sever actin filaments. This chain is F-actin-capping protein subunit beta (CAP2), found in Yarrowia lipolytica (strain CLIB 122 / E 150) (Yeast).